The chain runs to 289 residues: Rhodopsin (289 aa).

Residues 1–7 are Extracellular-facing; the sequence is YLVNPAA. A helical membrane pass occupies residues 8–32; sequence YAALGAYMFLLILIGFPINFLTLYV. Topologically, residues 33–44 are cytoplasmic; it reads TLEHKKLRTPLN. Residues 45 to 67 traverse the membrane as a helical segment; that stretch reads YILLNLAVANLFMVLGGFTTTMY. The Extracellular segment spans residues 68 to 81; the sequence is TSMHGYFVLGRLGC. Cysteine 81 and cysteine 158 are joined by a disulfide. The helical transmembrane segment at 82 to 104 threads the bilayer; the sequence is NLEAFFATLGGEIALWSLVVLAI. The 'Ionic lock' involved in activated form stabilization signature appears at 105-107; sequence ERW. The Cytoplasmic segment spans residues 105-123; it reads ERWIVVCKPISNFRFTEDH. Residues 124–144 traverse the membrane as a helical segment; that stretch reads AIMGLAFTWVMALACAVPPLV. Over 145-173 the chain is Extracellular; the sequence is GWSRYIPEGMQCSCGVDYYTRAEGFNNES. N-linked (GlcNAc...) asparagine glycosylation is present at asparagine 171. A helical transmembrane segment spans residues 174–195; the sequence is FVIYMFIVHFLIPLSVIFFCYG. The Cytoplasmic portion of the chain corresponds to 196 to 223; that stretch reads RLLCAVKEAPAAQQESETTQRAEKEVSR. Residues 224–245 form a helical membrane-spanning segment; sequence MVVIMVIGFLVCWLPYASVAWW. At 246–257 the chain is on the extracellular side; it reads IFCNQGSDFGPI. A helical transmembrane segment spans residues 258-279; that stretch reads FMTLPSFFAKSAAIYNPMIYIC. Position 267 is an N6-(retinylidene)lysine (lysine 267). The Cytoplasmic segment spans residues 280–289; that stretch reads MNKQFRHCMI.

It belongs to the G-protein coupled receptor 1 family. Opsin subfamily. Post-translationally, phosphorylated on some or all of the serine and threonine residues present in the C-terminal region. In terms of processing, contains one covalently linked retinal chromophore.

Its subcellular location is the membrane. It localises to the cell projection. It is found in the cilium. The protein localises to the photoreceptor outer segment. In terms of biological role, photoreceptor required for image-forming vision at low light intensity. While most salt water fish species use retinal as chromophore, most freshwater fish use 3-dehydroretinal, or a mixture of retinal and 3-dehydroretinal. Light-induced isomerization of 11-cis to all-trans retinal triggers a conformational change that activates signaling via G-proteins. Subsequent receptor phosphorylation mediates displacement of the bound G-protein alpha subunit by arrestin and terminates signaling. The polypeptide is Rhodopsin (rho) (Abyssocottus korotneffi (Baikalian deep-water sculpin)).